The sequence spans 119 residues: uncharacterized protein (119 aa).

The signal sequence occupies residues 1-30 (MCPECFFLMLCFCGYCSSSSSSFRSSPVYG).

This is an uncharacterized protein from Escherichia coli (strain UTI89 / UPEC).